Reading from the N-terminus, the 353-residue chain is Outer membrane protein P2 (353 aa).

An N-terminal signal peptide occupies residues 1-20 (MKKTLAALIVGAFAASAANA).

The protein belongs to the Gram-negative porin family. In terms of assembly, homotrimer.

Its subcellular location is the cell outer membrane. Functionally, forms pores that allow passive diffusion of small molecules across the outer membrane. This Haemophilus influenzae protein is Outer membrane protein P2 (ompP2).